Consider the following 562-residue polypeptide: Lamassu protein LmuB (562 aa).

Its function is as follows. Component of antiviral defense system Lamassu type I, composed of LmuA and LmuB. Expression of Lamassu type I in B.subtilis (strain BEST7003) confers resistance to phages phi3T, SpBeta and SPR. May be an ATPase. In Bacillus sp. (strain NCIM 5461 / CCTCC AB 2011126 / NIO-1130), this protein is Lamassu protein LmuB.